Consider the following 814-residue polypeptide: MEFILGIFCVLFCLRAGAGFGVDPSLQIDIFEDLQLGEATPGVQQVQGFHNRSKAFLFQDTSRSIKASTENAERIFQKLRNKHEFTILVTLKQAMLNSGVILSIHHSDHRYLELESSGHRNEVRLHYRSGSHRSQTEVFPYILADDKWHRFSIAISASHLVLHIDCNKIYERIVEKTFMDVPPGTALWVGQRNNVHGYFKGIMQDLQIVVMPQGFISQCPDLNRTCPTCNDFHGLVQKIMELQDILAKTSAKLSRAEQRMNRLDQCYCERSCTVKGNIYRELESWMDGCKKCTCTNGTAQCETLTCSAPNCLSGFSPAYVPGKCCKECQTVCVFQGQMYFEEEREAVYSSSGQCVLFQCKDNTMRRIESPECLPLNCPQSQHITLRNSCCKVCKGHDFCSEGHNCMGYSICKNLDDKAVCICRDGFRALREDNAYCEDIDECTEGRHYCRENTVCVNTPGSFMCVCQTGYLKIDDYSCTEHNECATNQHSCDENAMCFNTVGGHNCVCQPGYTGNGTDCRAFCKDGCRNGGTCIAPNICACPQGFTGPSCESDIDECTEGFVQCDSRANCINLPGWYHCECRDGYHDNGMFSLGGESCEDIDECATGRHSCSNDTVCFNLDGGFDCRCPHGKNCSGDCTHEGKIKHNGQIWVLENDRCSVCSCQVGLVMCRRMVCDCENPTVDLFCCPECDPRLSSQCLHQSGELTYKSGDTWVQNCQQCRCLQGEVDCWPLPCPAIDCEFSVVPESECCPRCVSDPCQADIIRNDITKTCVDETNVVRFTGSSWIKHGTECTLCQCKNGHMCCSVDPQCLQEL.

The N-terminal stretch at 1 to 19 is a signal peptide; sequence MEFILGIFCVLFCLRAGAG. 3 N-linked (GlcNAc...) asparagine glycosylation sites follow: N51, N223, and N296. Residues 53–226 enclose the Laminin G-like domain; sequence SKAFLFQDTS…SQCPDLNRTC (174 aa). The VWFC 1 domain occupies 270–329; sequence RSCTVKGNIYRELESWMDGCKKCTCTNGTAQCETLTCSAPNCLSGFSPAYVPGKCCKECQ. Residues 395–437 form the EGF-like 1 domain; that stretch reads GHDFCSEGHNCMGYSICKNLDDKAVCICRDGFRALREDNAYCE. 3 disulfide bridges follow: C399–C411, C405–C420, and C422–C436. Residues D438, I439, and E441 each coordinate Ca(2+). In terms of domain architecture, EGF-like 2; calcium-binding spans 438–479; the sequence is DIDECTEGRHYCRENTVCVNTPGSFMCVCQTGYLKIDDYSCT. 9 cysteine pairs are disulfide-bonded: C442/C455, C449/C464, C466/C478, C484/C497, C491/C506, C508/C519, C523/C533, C527/C539, and C541/C550. Residues N457, T458, and S461 each coordinate Ca(2+). One can recognise an EGF-like 3; calcium-binding domain in the interval 480–520; it reads EHNECATNQHSCDENAMCFNTVGGHNCVCQPGYTGNGTDCR. The N-linked (GlcNAc...) asparagine glycan is linked to N515. The EGF-like 4 domain occupies 521–551; it reads AFCKDGCRNGGTCIAPNICACPQGFTGPSCE. 3 residues coordinate Ca(2+): D553, I554, and E556. The EGF-like 5; calcium-binding domain occupies 553 to 599; that stretch reads DIDECTEGFVQCDSRANCINLPGWYHCECRDGYHDNGMFSLGGESCE. Cystine bridges form between C557/C570, C564/C579, and C581/C598. N572, L573, and W576 together coordinate Ca(2+). Ca(2+) contacts are provided by D600, I601, and E603. The region spanning 600–635 is the EGF-like 6; calcium-binding domain; it reads DIDECATGRHSCSNDTVCFNLDGGFDCRCPHGKNCS. 3 disulfides stabilise this stretch: C604–C617, C611–C626, and C628–C634. An N-linked (GlcNAc...) asparagine glycan is attached at N613. Positions 619, 620, and 623 each coordinate Ca(2+). N633 carries an N-linked (GlcNAc...) asparagine glycan. 2 VWFC domains span residues 636–691 and 696–754; these read GDCT…PECD and SQCL…PRCV.

As to quaternary structure, homotrimer.

The protein localises to the secreted. Functionally, may regulate neuronal differentiation, polarization and axon guidance. The chain is Protein kinase C-binding protein NELL2 (nell2.L) from Xenopus laevis (African clawed frog).